Consider the following 583-residue polypeptide: Probable GTP diphosphokinase CRSH, chloroplastic (583 aa).

Residues 1–58 (MSVIRPSPIPIPRCRSQVLHRRLYSIQLIQRRRRRWNPRSEVEDTAIESTARSPEAAG) constitute a chloroplast transit peptide. Positions 112–212 (PLSKALSLSI…MDLVSKLDEM (101 aa)) constitute an HD domain. EF-hand domains are found at residues 470-505 (TTTNQRDRVFCLLDKNGDGMISIEELMEVMEELGAP) and 507-539 (EDAEEMMQLLDSNSDGSLSSDEFDTFQKQVEFM). Positions 483, 485, 487, 489, 494, 517, 519, 521, 523, and 528 each coordinate Ca(2+).

It belongs to the RelA/SpoT family. In terms of tissue distribution, expressed in shoots, cotyledons, rosette and cauline leaves, stems, sepals, pistils and siliques.

It localises to the plastid. The protein localises to the chloroplast. The enzyme catalyses GTP + ATP = guanosine 3'-diphosphate 5'-triphosphate + AMP. Its activity is regulated as follows. Activated by calcium. Possesses calcium-dependent ppGpp (guanosine 3'-diphosphate 5'-diphosphate) synthetase activity in vitro and is able to functionally complement E.coli relA mutants. Plays an important role in the timing adjustment of pistil and pollen maturation required for successful pollination. May be involved in a rapid plant ppGpp-mediated response to pathogens and other stresses. This Arabidopsis thaliana (Mouse-ear cress) protein is Probable GTP diphosphokinase CRSH, chloroplastic (CRSH).